Reading from the N-terminus, the 453-residue chain is UDP-N-acetylmuramoylalanine--D-glutamate ligase (453 aa).

Glycine 115 to threonine 121 is a binding site for ATP.

This sequence belongs to the MurCDEF family.

Its subcellular location is the cytoplasm. The enzyme catalyses UDP-N-acetyl-alpha-D-muramoyl-L-alanine + D-glutamate + ATP = UDP-N-acetyl-alpha-D-muramoyl-L-alanyl-D-glutamate + ADP + phosphate + H(+). It functions in the pathway cell wall biogenesis; peptidoglycan biosynthesis. In terms of biological role, cell wall formation. Catalyzes the addition of glutamate to the nucleotide precursor UDP-N-acetylmuramoyl-L-alanine (UMA). This chain is UDP-N-acetylmuramoylalanine--D-glutamate ligase, found in Geotalea uraniireducens (strain Rf4) (Geobacter uraniireducens).